We begin with the raw amino-acid sequence, 192 residues long: Probable nicotinate-nucleotide adenylyltransferase (192 aa).

This sequence belongs to the NadD family.

The catalysed reaction is nicotinate beta-D-ribonucleotide + ATP + H(+) = deamido-NAD(+) + diphosphate. Its pathway is cofactor biosynthesis; NAD(+) biosynthesis; deamido-NAD(+) from nicotinate D-ribonucleotide: step 1/1. In terms of biological role, catalyzes the reversible adenylation of nicotinate mononucleotide (NaMN) to nicotinic acid adenine dinucleotide (NaAD). This is Probable nicotinate-nucleotide adenylyltransferase from Rhizobium etli (strain CIAT 652).